The sequence spans 239 residues: Probable plastid-lipid-associated protein 8, chloroplastic (239 aa).

A chloroplast-targeting transit peptide spans 1-52; that stretch reads MAATASSLTIASSFSEPRTQIHSSRRLNLPLQYSIPYKVLRSRSRRLGLVVS. Position 53 is an N-acetylserine (serine 53).

This sequence belongs to the PAP/fibrillin family.

It localises to the plastid. The protein resides in the chloroplast. The sequence is that of Probable plastid-lipid-associated protein 8, chloroplastic (PAP8) from Arabidopsis thaliana (Mouse-ear cress).